A 357-amino-acid chain; its full sequence is uncharacterized protein (357 aa).

9 helical membrane-spanning segments follow: residues proline 13–valine 33, isoleucine 44–tyrosine 64, valine 72–leucine 92, valine 148–valine 168, leucine 181–phenylalanine 201, tyrosine 203–tryptophan 223, isoleucine 266–phenylalanine 286, serine 293–isoleucine 313, and tyrosine 327–leucine 347.

The protein resides in the mitochondrion membrane. This is an uncharacterized protein from Schizosaccharomyces pombe (strain 972 / ATCC 24843) (Fission yeast).